Consider the following 79-residue polypeptide: Large ribosomal subunit protein uL29 (79 aa).

Belongs to the universal ribosomal protein uL29 family.

This chain is Large ribosomal subunit protein uL29, found in Tropheryma whipplei (strain Twist) (Whipple's bacillus).